We begin with the raw amino-acid sequence, 461 residues long: MYINTLFWKQNPTGDKKNQEEKMQKTLLSCLITTLLLITVADSMKDTSVRLKLAHRDTLLPKPLSRIEDVIGADQKRHSLISRKRNSTVGVKMDLGSGIDYGTAQYFTEIRVGTPAKKFRVVVDTGSELTWVNCRYRARGKDNRRVFRADESKSFKTVGCLTQTCKVDLMNLFSLTTCPTPSTPCSYDYRYADGSAAQGVFAKETITVGLTNGRMARLPGHLIGCSSSFTGQSFQGADGVLGLAFSDFSFTSTATSLYGAKFSYCLVDHLSNKNVSNYLIFGSSRSTKTAFRRTTPLDLTRIPPFYAINVIGISLGYDMLDIPSQVWDATSGGGTILDSGTSLTLLADAAYKQVVTGLARYLVELKRVKPEGVPIEYCFSFTSGFNVSKLPQLTFHLKGGARFEPHRKSYLVDAAPGVKCLGFVSAGTPATNVIGNIMQQNYLWEFDLMASTLSFAPSACT.

Residue N86 is glycosylated (N-linked (GlcNAc...) asparagine). Positions 106–456 (YFTEIRVGTP…DLMASTLSFA (351 aa)) constitute a Peptidase A1 domain. The active site involves D124. N-linked (GlcNAc...) asparagine glycosylation occurs at N274. D338 is an active-site residue. A glycan (N-linked (GlcNAc...) asparagine) is linked at N386.

Belongs to the peptidase A1 family.

The protein localises to the plastid. It is found in the chloroplast. Repressed by pepstatin A. In terms of biological role, aspartic proteinase that can use azocasein as substrate and regulates endogenous sugar levels (e.g. sucrose, glucose and fructose) by modulating starch accumulation and remobilization. Influences general morphology and development. This Arabidopsis thaliana (Mouse-ear cress) protein is Aspartic proteinase NANA, chloroplast.